Here is a 25-residue protein sequence, read N- to C-terminus: WLGSALKIGAKLLPSVVGLFQKKKK.

As to expression, expressed by the venom gland.

The protein localises to the secreted. It localises to the target cell membrane. In terms of biological role, has a broad spectrum of activity against both Gram-positive and Gram-negative bacteria and S.cerevisiae. Has insecticidal and hemolytic activities. May act by disrupting the integrity of the bacterial cell membrane. The chain is U1-poneritoxin-Ng1b from Neoponera goeldii (Ponerine ant).